The primary structure comprises 518 residues: GTPase MTG2, mitochondrial (518 aa).

The N-terminal 23 residues, 1-23, are a transit peptide targeting the mitochondrion; sequence MSIAWSSVFKRELRLERFLPRVY. One can recognise an Obg domain in the interval 89 to 339; that stretch reads GNFVDVRIVK…QHFLFELKSI (251 aa). The OBG-type G domain occupies 340 to 512; it reads ADLGLIGLPN…LKKKMFKCAR (173 aa). GTP is bound by residues 346 to 353, 394 to 398, and 460 to 463; these read GLPNAGKS, DIPGI, and NKVD.

It belongs to the TRAFAC class OBG-HflX-like GTPase superfamily. OBG GTPase family. As to quaternary structure, interacts with the mitochondrial 54S large ribosomal subunit.

Its subcellular location is the mitochondrion inner membrane. In terms of biological role, required for mitochondrial protein synthesis. May be involved in mitochondrial ribosome biogenesis. The chain is GTPase MTG2, mitochondrial (MTG2) from Saccharomyces cerevisiae (strain ATCC 204508 / S288c) (Baker's yeast).